A 145-amino-acid chain; its full sequence is Large ribosomal subunit protein uL11 (145 aa).

Belongs to the universal ribosomal protein uL11 family. Part of the ribosomal stalk of the 50S ribosomal subunit. Interacts with L10 and the large rRNA to form the base of the stalk. L10 forms an elongated spine to which L12 dimers bind in a sequential fashion forming a multimeric L10(L12)X complex. In terms of processing, one or more lysine residues are methylated.

Functionally, forms part of the ribosomal stalk which helps the ribosome interact with GTP-bound translation factors. The polypeptide is Large ribosomal subunit protein uL11 (Persephonella marina (strain DSM 14350 / EX-H1)).